Reading from the N-terminus, the 152-residue chain is Deoxyuridine 5'-triphosphate nucleotidohydrolase (152 aa).

Substrate is bound by residues 71 to 73 (RSG), N84, and 88 to 90 (LID).

It belongs to the dUTPase family. Requires Mg(2+) as cofactor.

It catalyses the reaction dUTP + H2O = dUMP + diphosphate + H(+). The protein operates within pyrimidine metabolism; dUMP biosynthesis; dUMP from dCTP (dUTP route): step 2/2. Its function is as follows. This enzyme is involved in nucleotide metabolism: it produces dUMP, the immediate precursor of thymidine nucleotides and it decreases the intracellular concentration of dUTP so that uracil cannot be incorporated into DNA. The sequence is that of Deoxyuridine 5'-triphosphate nucleotidohydrolase from Xanthomonas campestris pv. campestris (strain 8004).